Here is a 305-residue protein sequence, read N- to C-terminus: Probable pyridoxal 5'-phosphate synthase subunit pdx1 (305 aa).

Asp33 contributes to the D-ribose 5-phosphate binding site. Lys90 acts as the Schiff-base intermediate with D-ribose 5-phosphate in catalysis. A D-ribose 5-phosphate-binding site is contributed by Gly162. Arg174 contacts D-glyceraldehyde 3-phosphate. D-ribose 5-phosphate-binding positions include Gly223 and 244 to 245 (GS).

The protein belongs to the PdxS/SNZ family. In terms of assembly, homohexamer.

It catalyses the reaction aldehydo-D-ribose 5-phosphate + D-glyceraldehyde 3-phosphate + L-glutamine = pyridoxal 5'-phosphate + L-glutamate + phosphate + 3 H2O + H(+). Its pathway is cofactor biosynthesis; pyridoxal 5'-phosphate biosynthesis. Functionally, catalyzes the formation of pyridoxal 5'-phosphate from ribose 5-phosphate (RBP), glyceraldehyde 3-phosphate (G3P) and ammonia. The ammonia is provided by pdx2. Can also use ribulose 5-phosphate and dihydroxyacetone phosphate as substrates, resulting from enzyme-catalyzed isomerization of RBP and G3P, respectively. The protein is Probable pyridoxal 5'-phosphate synthase subunit pdx1 (pdx1) of Dictyostelium discoideum (Social amoeba).